Consider the following 77-residue polypeptide: Defensin-like protein 1 (77 aa).

A signal peptide spans 1–30; sequence MKLSVRFISAALLLFMVFIATGMGPVTVEA. Disulfide bonds link Cys33-Cys77, Cys44-Cys64, Cys50-Cys71, and Cys54-Cys73.

Belongs to the DEFL family. In terms of tissue distribution, expressed in the whole plant except roots.

It is found in the secreted. In terms of biological role, confers broad-spectrum resistance to pathogens. The polypeptide is Defensin-like protein 1 (PDF2.3) (Arabidopsis thaliana (Mouse-ear cress)).